A 365-amino-acid chain; its full sequence is L-lactate oxidase (365 aa).

The FMN hydroxy acid dehydrogenase domain maps to 2–365; the sequence is TAISSPINLF…QDIDTSFLHL (364 aa). A pyruvate-binding site is contributed by Tyr-28. FMN-binding positions include 81-83, Ser-110, and Gln-135; that span reads PMA. Tyr-137 provides a ligand contact to pyruvate. Residue Thr-163 participates in FMN binding. Arg-172 lines the pyruvate pocket. Lys-239 and Ser-261 together coordinate FMN. Positions 263 and 266 each coordinate pyruvate. The Proton acceptor role is filled by His-263. Residues 294-298 and Arg-318 contribute to the FMN site; that span reads DGGIR.

It belongs to the FMN-dependent alpha-hydroxy acid dehydrogenase family. As to quaternary structure, homotetramer. FMN is required as a cofactor.

It carries out the reaction (S)-lactate + O2 = pyruvate + H2O2. The catalysed reaction is glyoxylate + O2 + H2O = oxalate + H2O2 + H(+). Functionally, catalyzes the oxidation of (S)-lactate (L-lactate) to pyruvate, with a reduction of O2 to H2O2. In extant N2-fixing cyanobacteria such as Nostoc, this enzyme primarily serves as an O2-scavenging enzyme, protecting nitrogenase that is extremely sensitive to O2, and is therefore an essential partner in N2 fixation. Also shows clear oxidase activity with glyoxylate in vitro, and low activity with glycerate, hydroxypyruvate and glycolate. The very low glycolate oxidase activity indicates that this enzyme is unlikely to be involved in photorespiratory glycolate metabolism, a pathway that seems to exist in this cyanobacterium, but in which the oxidation of glycolate is taken over by glycolate dehydrogenase (GlcD). Is not able to use D-lactate as substrate and does not show any dehydrogenase activity with NAD(+) or NADP(+). This chain is L-lactate oxidase, found in Nostoc sp. (strain PCC 7120 / SAG 25.82 / UTEX 2576).